The chain runs to 213 residues: Pyridoxine/pyridoxamine 5'-phosphate oxidase (213 aa).

Substrate-binding positions include 9–12 (RKDY) and Lys-67. FMN-binding positions include 62–67 (RIVLLK), 77–78 (FT), Arg-83, Lys-84, and Gln-106. Substrate contacts are provided by Tyr-124, Arg-128, and Ser-132. FMN is bound by residues 141 to 142 (QS) and Trp-186. 192–194 (RLH) is a binding site for substrate. Arg-196 lines the FMN pocket.

Belongs to the pyridoxamine 5'-phosphate oxidase family. As to quaternary structure, homodimer. It depends on FMN as a cofactor.

It catalyses the reaction pyridoxamine 5'-phosphate + O2 + H2O = pyridoxal 5'-phosphate + H2O2 + NH4(+). The enzyme catalyses pyridoxine 5'-phosphate + O2 = pyridoxal 5'-phosphate + H2O2. It participates in cofactor metabolism; pyridoxal 5'-phosphate salvage; pyridoxal 5'-phosphate from pyridoxamine 5'-phosphate: step 1/1. Its pathway is cofactor metabolism; pyridoxal 5'-phosphate salvage; pyridoxal 5'-phosphate from pyridoxine 5'-phosphate: step 1/1. In terms of biological role, catalyzes the oxidation of either pyridoxine 5'-phosphate (PNP) or pyridoxamine 5'-phosphate (PMP) into pyridoxal 5'-phosphate (PLP). In Cyanothece sp. (strain PCC 7425 / ATCC 29141), this protein is Pyridoxine/pyridoxamine 5'-phosphate oxidase.